A 460-amino-acid polypeptide reads, in one-letter code: Cytochrome P450 CYP71D312 (460 aa).

Cysteine 398 lines the heme pocket.

Belongs to the cytochrome P450 family. It depends on heme as a cofactor.

Its function is as follows. Probable heme-thiolate monooxygenase. This chain is Cytochrome P450 CYP71D312, found in Panax ginseng (Korean ginseng).